Reading from the N-terminus, the 196-residue chain is Large ribosomal subunit protein bL9 (196 aa).

The segment at 174-196 (QAAADLLEGGAGQQASEYTEAQA) is disordered. The segment covering 186–196 (QQASEYTEAQA) has biased composition (polar residues).

This sequence belongs to the bacterial ribosomal protein bL9 family.

In terms of biological role, binds to the 23S rRNA. The chain is Large ribosomal subunit protein bL9 from Phenylobacterium zucineum (strain HLK1).